The following is a 330-amino-acid chain: Probable integrase/recombinase protein MJ0367 (330 aa).

Positions Ile22–Arg112 constitute a Core-binding (CB) domain. Residues Gln136–Lys325 form the Tyr recombinase domain. Residues Arg177, Lys202, His275, Arg278, and His301 contribute to the active site. Tyr310 (O-(3'-phospho-DNA)-tyrosine intermediate) is an active-site residue.

This sequence belongs to the 'phage' integrase family.

This chain is Probable integrase/recombinase protein MJ0367, found in Methanocaldococcus jannaschii (strain ATCC 43067 / DSM 2661 / JAL-1 / JCM 10045 / NBRC 100440) (Methanococcus jannaschii).